The sequence spans 350 residues: Protein RecA (350 aa).

Residue 67 to 74 (GPESSGKT) participates in ATP binding.

It belongs to the RecA family.

The protein resides in the cytoplasm. Functionally, can catalyze the hydrolysis of ATP in the presence of single-stranded DNA, the ATP-dependent uptake of single-stranded DNA by duplex DNA, and the ATP-dependent hybridization of homologous single-stranded DNAs. It interacts with LexA causing its activation and leading to its autocatalytic cleavage. The sequence is that of Protein RecA from Chromobacterium violaceum (strain ATCC 12472 / DSM 30191 / JCM 1249 / CCUG 213 / NBRC 12614 / NCIMB 9131 / NCTC 9757 / MK).